A 183-amino-acid polypeptide reads, in one-letter code: Protein Syd (183 aa).

It belongs to the Syd family.

The protein resides in the cell inner membrane. In terms of biological role, interacts with the SecY protein in vivo. May bind preferentially to an uncomplexed state of SecY, thus functioning either as a chelating agent for excess SecY in the cell or as a regulatory factor that negatively controls the translocase function. The sequence is that of Protein Syd from Idiomarina loihiensis (strain ATCC BAA-735 / DSM 15497 / L2-TR).